A 445-amino-acid chain; its full sequence is Argininosuccinate synthase (445 aa).

Residues 17 to 25 and A43 contribute to the ATP site; that span reads AFSGGLDTS. Y99 contacts L-citrulline. Residues G129 and T131 each contribute to the ATP site. Residues T131, N135, and D136 each coordinate L-aspartate. N135 is a binding site for L-citrulline. Residue D136 coordinates ATP. L-citrulline-binding residues include R139 and S192. An ATP-binding site is contributed by D194. Residues T201, E203, and E280 each contribute to the L-citrulline site.

Belongs to the argininosuccinate synthase family. Type 2 subfamily. Homotetramer.

Its subcellular location is the cytoplasm. It catalyses the reaction L-citrulline + L-aspartate + ATP = 2-(N(omega)-L-arginino)succinate + AMP + diphosphate + H(+). The protein operates within amino-acid biosynthesis; L-arginine biosynthesis; L-arginine from L-ornithine and carbamoyl phosphate: step 2/3. In Acidobacterium capsulatum (strain ATCC 51196 / DSM 11244 / BCRC 80197 / JCM 7670 / NBRC 15755 / NCIMB 13165 / 161), this protein is Argininosuccinate synthase.